Reading from the N-terminus, the 87-residue chain is Potassium channel toxin TsTXK-beta/Cryptide TyPep-16 (87 aa).

The N-terminal stretch at 1–19 (MERKLALLLILGMVTLASC) is a signal peptide. A BetaSPN-type CS-alpha/beta domain is found at 53-87 (QFGCPAYEGYCNDHCNDIERKDGECHGFKCKCAKD). 3 cysteine pairs are disulfide-bonded: C56/C77, C63/C82, and C67/C84.

Belongs to the long chain scorpion toxin family. Class 1 subfamily. In terms of tissue distribution, expressed by the venom gland.

Its subcellular location is the secreted. Functionally, specifically blocks voltage-gated potassium channels Kv4.2/KCND2. When measured at the peak current, the blocking effect of this toxin is about 65% and shows an IC(50)=652 nM. However, when measured at a later moment of the depolarising test pulse (500 ms), a 100% block of the current is observed with an IC(50)=313 nM. This may indicate a preference of the toxin for binding the inactivated state of the channel. The inhibition is completely reversible. In vivo, intraplantar injection into rat paw induces overt nociception (licking and lifting behaviors) and decreases the mechanical nociceptive threshold (hyperalgesia). Furthermore, the hyperalgesia is prolonged when intrathecal injections are performed. In terms of biological role, induces discomfort and anxiety in mice, as it moderately diminishes locomotion (but has no effect on rearing behavior). Does not cause hemolysis, mast cell degranulation, LDH release, and does not have antimicrobial activity. Does not cause edema and pain. Its function is as follows. Does not induce hemolytic activity, lactate dehydrogenase (LDH) release from mast cells, mast cell degranulation, and antimicrobial effects. In vivo, injection into mice causes moderate edema formation, but induces very weak or no change in nociceptive sensibility. It also reduces mice locomotion, suggesting an increase in anxiety, but causes no alteration in rearing (standing on hind limbs). The sequence is that of Potassium channel toxin TsTXK-beta/Cryptide TyPep-16 from Tityus serrulatus (Brazilian scorpion).